A 433-amino-acid polypeptide reads, in one-letter code: GTPase Obg (433 aa).

In terms of domain architecture, Obg spans 1–159; it reads MGLTDYCECR…LHVSLEIKYL (159 aa). The region spanning 160–329 is the OBG-type G domain; sequence ANVGIVGFPN…LVAQVFALHQ (170 aa). GTP-binding positions include 166–173, 191–195, 212–215, 282–285, and 310–312; these read GFPNTGKS, FTTLV, DIPG, NKTD, and ISA. 2 residues coordinate Mg(2+): Ser173 and Thr193. The region spanning 355 to 433 is the OCT domain; sequence ASETDHDPLN…FAGQEFVIND (79 aa).

Belongs to the TRAFAC class OBG-HflX-like GTPase superfamily. OBG GTPase family. Monomer. Requires Mg(2+) as cofactor.

The protein resides in the cytoplasm. Its function is as follows. An essential GTPase which binds GTP, GDP and possibly (p)ppGpp with moderate affinity, with high nucleotide exchange rates and a fairly low GTP hydrolysis rate. Plays a role in control of the cell cycle, stress response, ribosome biogenesis and in those bacteria that undergo differentiation, in morphogenesis control. This chain is GTPase Obg, found in Mycoplasma pneumoniae (strain ATCC 29342 / M129 / Subtype 1) (Mycoplasmoides pneumoniae).